The sequence spans 468 residues: ATP synthase subunit beta (468 aa).

155 to 162 contacts ATP; the sequence is GGAGVGKT.

The protein belongs to the ATPase alpha/beta chains family. As to quaternary structure, F-type ATPases have 2 components, CF(1) - the catalytic core - and CF(0) - the membrane proton channel. CF(1) has five subunits: alpha(3), beta(3), gamma(1), delta(1), epsilon(1). CF(0) has three main subunits: a(1), b(2) and c(9-12). The alpha and beta chains form an alternating ring which encloses part of the gamma chain. CF(1) is attached to CF(0) by a central stalk formed by the gamma and epsilon chains, while a peripheral stalk is formed by the delta and b chains.

It is found in the cell membrane. The catalysed reaction is ATP + H2O + 4 H(+)(in) = ADP + phosphate + 5 H(+)(out). Functionally, produces ATP from ADP in the presence of a proton gradient across the membrane. The catalytic sites are hosted primarily by the beta subunits. The sequence is that of ATP synthase subunit beta from Streptococcus agalactiae serotype III (strain NEM316).